The chain runs to 137 residues: Large ribosomal subunit protein uL16 (137 aa).

The protein belongs to the universal ribosomal protein uL16 family. Part of the 50S ribosomal subunit.

Functionally, binds 23S rRNA and is also seen to make contacts with the A and possibly P site tRNAs. The polypeptide is Large ribosomal subunit protein uL16 (Leptospira biflexa serovar Patoc (strain Patoc 1 / Ames)).